We begin with the raw amino-acid sequence, 167 residues long: Small ribosomal subunit protein uS9 (167 aa).

A disordered region spans residues 136–167 (KRAGFLTRDPRATERKKYGLKKARKAPQYSKR). The span at 143–152 (RDPRATERKK) shows a compositional bias: basic and acidic residues. Basic residues predominate over residues 153-167 (YGLKKARKAPQYSKR).

This sequence belongs to the universal ribosomal protein uS9 family.

The chain is Small ribosomal subunit protein uS9 from Nocardia farcinica (strain IFM 10152).